Here is a 239-residue protein sequence, read N- to C-terminus: tRNA (guanine-N(1)-)-methyltransferase (239 aa).

S-adenosyl-L-methionine is bound by residues glycine 110 and 130 to 135 (VGDYVL).

The protein belongs to the RNA methyltransferase TrmD family. As to quaternary structure, homodimer.

It is found in the cytoplasm. The catalysed reaction is guanosine(37) in tRNA + S-adenosyl-L-methionine = N(1)-methylguanosine(37) in tRNA + S-adenosyl-L-homocysteine + H(+). Its function is as follows. Specifically methylates guanosine-37 in various tRNAs. The polypeptide is tRNA (guanine-N(1)-)-methyltransferase (Borrelia hermsii (strain HS1 / DAH)).